Reading from the N-terminus, the 82-residue chain is Apovitellenin-1 (82 aa).

Belongs to the apovitellenin family. Monomer. In terms of tissue distribution, found in egg yolk and in plasma.

In terms of biological role, protein component of the very low density lipoprotein (VLDL) of egg-laying females. Potent lipoprotein lipase inhibitor, preventing the loss of triglycerides from VLDL on their way from the liver to the growing oocytes. This Meleagris gallopavo (Wild turkey) protein is Apovitellenin-1.